The primary structure comprises 123 residues: MKRGFTLLEVMLALAIFALSATAVLQIASGALSNQHVLEEKTVAGWVAENQTALLYLMTRGQRAVRQQGESDMAGSRWYWRTTPLSTGNALLQAVDIEVSLHEDFSSVIQSRRAWFSAVGGQQ.

The propeptide at 1-4 (MKRG) is leader sequence. N-methylphenylalanine is present on Phe5. A helical transmembrane segment spans residues 5–25 (FTLLEVMLALAIFALSATAVL).

The protein belongs to the GSP I family. Type II secretion is composed of four main components: the outer membrane complex, the inner membrane complex, the cytoplasmic secretion ATPase and the periplasm-spanning pseudopilus. Interacts with core component GspG. Interacts with pseudopilins GspJ and GspK. Post-translationally, cleaved by prepilin peptidase. In terms of processing, methylated by prepilin peptidase at the amino group of the N-terminal phenylalanine once the leader sequence is cleaved by prepilin peptidase.

Its subcellular location is the cell inner membrane. Its function is as follows. Component of the type II secretion system required for the energy-dependent secretion of extracellular factors such as proteases and toxins from the periplasm. Part of the pseudopilus tip complex that is critical for the recognition and binding of secretion substrates. This Escherichia coli protein is Type II secretion system protein I (gspI).